We begin with the raw amino-acid sequence, 731 residues long: SUN domain-containing protein 2 (731 aa).

Disordered regions lie at residues 1-69 (MSRR…SHTS) and 106-142 (SGDL…FGSS). Residues 1–128 (MSRRSQRLTR…GSESSKANGL (128 aa)) form an LMNA-binding region. Residues 1 to 226 (MSRRSQRLTR…SRHFSLNLKS (226 aa)) are Nuclear-facing. S12 is subject to Phosphoserine. Low complexity predominate over residues 18–33 (GGSSSSGASSVAGSQG). Phosphoserine occurs at positions 39 and 55. Residue T117 is modified to Phosphothreonine. 3 positions are modified to phosphoserine: S120, S123, and S147. A helical membrane pass occupies residues 227–247 (FLWFLLLLLLLTGLTYGAWHF). Over 248-731 (YPLGLQTLQP…RFRVHGEPAH (484 aa)) the chain is Perinuclear space. 2 coiled-coil regions span residues 396 to 452 (QESE…VADE) and 486 to 519 (RSGL…KSAR). Residues 521–731 (AAASLGQILQ…RFRVHGEPAH (211 aa)) are sufficient for interaction with SYNE1 and SYNE2. An SUN domain is found at 569–730 (GASVISTRCS…YRFRVHGEPA (162 aa)). The N-linked (GlcNAc...) asparagine glycan is linked to N650.

As to quaternary structure, core component of the LINC complex which is composed of inner nuclear membrane SUN domain-containing proteins coupled to outer nuclear membrane KASH domain-containing nesprins. SUN and KASH domain-containing proteins seem to bind each other promiscuously; however, differentially expression of LINC complex constituents is giving rise to specific assemblies. At least SUN1/2-containing core LINC complexes are proposed to be hexameric composed of three protomers of each KASH and SUN domain-containing protein. Interacts with SYNE2; the SUN2:SYNE2/KASH2 LINC complex is a heterohexamer; the homotrimeric cloverleave-like conformation of the SUN domain is a prerequisite for LINC complex formation in which three separate SYNE2/KASH2 peptides bind at the interface of adjacent SUN domains. Component of a probable SUN2:KASH5 LINC complex. Interacts with SYNE1 and SYNE3; probably forming respective LINC complexes. Interacts with A-type lamin. Interaction with lamins B1 and C is hardly detectable. Interacts with EMD. Interacts with RAB5A. Interacts with TMEM43 and TMEM201. Interacts with IRAG2. In terms of processing, the disulfide bond with SYNE2 is required for stability of the SUN2:SYNE2/KASH2 LINC complex under tensile forces though not required for the interaction. The disulfide bond is proposed to be conserved in LINC complexes involved in force transmission. In terms of tissue distribution, highly expressed in heart, placenta and muscle.

Its subcellular location is the nucleus inner membrane. It localises to the nucleus envelope. The protein resides in the endosome membrane. Its function is as follows. As a component of the LINC (LInker of Nucleoskeleton and Cytoskeleton) complex, involved in the connection between the nuclear lamina and the cytoskeleton. The nucleocytoplasmic interactions established by the LINC complex play an important role in the transmission of mechanical forces across the nuclear envelope and in nuclear movement and positioning. Specifically, SYNE2 and SUN2 assemble in arrays of transmembrane actin-associated nuclear (TAN) lines which are bound to F-actin cables and couple the nucleus to retrograde actin flow during actin-dependent nuclear movement. Required for interkinetic nuclear migration (INM) and essential for nucleokinesis and centrosome-nucleus coupling during radial neuronal migration in the cerebral cortex and during glial migration. Required for nuclear migration in retinal photoreceptor progenitors implicating association with cytoplasmic dynein-dynactin and kinesin motor complexes, and probably B-type lamins; SUN1 and SUN2 seem to act redundantly. The SUN1/2:KASH5 LINC complex couples telomeres to microtubules during meiosis; SUN1 and SUN2 seem to act at least partial redundantly. Anchors chromosome movement in the prophase of meiosis and is involved in selective gene expression of coding and non-coding RNAs needed for gametogenesis. Required for telomere attachment to nuclear envelope and gametogenesis. May also function on endocytic vesicles as a receptor for Rab5-GDP and participate in the activation of Rab5. This is SUN domain-containing protein 2 from Mus musculus (Mouse).